Here is a 218-residue protein sequence, read N- to C-terminus: Dehydration-responsive element-binding protein 1B (218 aa).

The segment at 1–26 is disordered; sequence MEVEEAAYRTVWSEPPKRPAGRTKFR. The AP2/ERF DNA-binding region spans 32–95; it reads VYRGVRRRGG…RGRAACLNFA (64 aa). The segment at 131–151 is disordered; that stretch reads SAAPSSPAETFADDGDEEEDN. Residues 141 to 151 are compositionally biased toward acidic residues; sequence FADDGDEEEDN.

The protein belongs to the AP2/ERF transcription factor family. ERF subfamily.

The protein resides in the nucleus. Transcriptional activator that binds specifically to the DNA sequence 5'-[AG]CCGAC-3'. Binding to the C-repeat/DRE element mediates high salinity- and dehydration-inducible transcription. Confers resistance to high salt, cold and drought stress. In Oryza sativa subsp. indica (Rice), this protein is Dehydration-responsive element-binding protein 1B (DREB1B).